A 120-amino-acid chain; its full sequence is NADH dehydrogenase [ubiquinone] 1 subunit C2 (120 aa).

The helical transmembrane segment at 57-76 threads the bilayer; the sequence is GLHRQLLFVTSFVFAGYFYL.

The protein belongs to the complex I NDUFC2 subunit family. Complex I is composed of 45 different subunits. Interacts with TMEM242.

The protein resides in the mitochondrion inner membrane. Accessory subunit of the mitochondrial membrane respiratory chain NADH dehydrogenase (Complex I), that is believed not to be involved in catalysis but required for the complex assembly. Complex I functions in the transfer of electrons from NADH to the respiratory chain. The immediate electron acceptor for the enzyme is believed to be ubiquinone. This Mus musculus (Mouse) protein is NADH dehydrogenase [ubiquinone] 1 subunit C2.